A 133-amino-acid polypeptide reads, in one-letter code: Small ribosomal subunit protein eS24y (133 aa).

The disordered stretch occupies residues 104–133 (KSRKQIKERKNRAKKIRGVKKTKAGDTKKK). Residues 109 to 125 (IKERKNRAKKIRGVKKT) are compositionally biased toward basic residues.

This sequence belongs to the eukaryotic ribosomal protein eS24 family.

This is Small ribosomal subunit protein eS24y (RPS24B) from Arabidopsis thaliana (Mouse-ear cress).